A 591-amino-acid chain; its full sequence is MHAYRSHTCTELNAAHVGQEVRLSGWVHRVRDHGGVLFLDLRDHYGITQVIADADSPAFAELETVRAEWVIRIEGRVKARDASLVNPKLATGEIEVYATGMSVLGAADELPLPVFGETDYPEETRLTYRFLDLRREKLHQNMMLRSNVVRSLRNRMWGAGFNEFQTPIITASSPEGARDFLVPSRLHPGKFYALPQAPQQFKQLIMVAGFDRYFQIAPCFRDEDPRADRSPTDFYQLDIEMSFVEQEDVFAAVQPVIQGLFEEFGHGKRVDADWPRIAYRDAMLWYGSDKPDLRNPIKMQVVSEHFAGSGFAIFAKLLENEGTEIRAIPAPTGGSRKFCDRMNAFAQSQGLPGMGYIFWRKGDDGAMEAAGPLAKNIGPERTEAIRQQLGLGEGDAAFFLGGKPETFEAVAGRARTEIGRELGLTEENCFKFAWIVDFPMYEKDDEGKIDFSHNPFSMPQGGMEALEGDPLKVHAYQYDLACNGYELISGGIRNHKPEIMFKAFELAGYPKEEVEKRFGGMVKAFRYGAPPHGGCAAGIDRIVMLLADEANIREVIMFPMNQRAEDLLMGAPSEPTNEQLRELRLRVVPKD.

Residue glutamate 175 participates in L-aspartate binding. Residues 199–202 (QQFK) are aspartate. Residues arginine 221 and histidine 453 each coordinate L-aspartate. Residue 221–223 (RDE) coordinates ATP. Residue glutamate 486 participates in ATP binding. Arginine 493 contributes to the L-aspartate binding site. Position 538-541 (538-541 (GIDR)) interacts with ATP.

Belongs to the class-II aminoacyl-tRNA synthetase family. Type 1 subfamily. Homodimer.

It localises to the cytoplasm. It carries out the reaction tRNA(Asx) + L-aspartate + ATP = L-aspartyl-tRNA(Asx) + AMP + diphosphate. Functionally, aspartyl-tRNA synthetase with relaxed tRNA specificity since it is able to aspartylate not only its cognate tRNA(Asp) but also tRNA(Asn). Reaction proceeds in two steps: L-aspartate is first activated by ATP to form Asp-AMP and then transferred to the acceptor end of tRNA(Asp/Asn). The polypeptide is Aspartate--tRNA(Asp/Asn) ligase (Cereibacter sphaeroides (strain ATCC 17029 / ATH 2.4.9) (Rhodobacter sphaeroides)).